A 115-amino-acid chain; its full sequence is U3-lycotoxin-Ls1a (115 aa).

The N-terminal stretch at 1–20 (MKFVLLFGVLLVTLFSYSSA) is a signal peptide. Positions 21–44 (EMLDDFDQADEDELLSLIEKEEAR) are excised as a propeptide. 4 cysteine pairs are disulfide-bonded: C48–C63, C55–C72, C62–C87, and C74–C85.

It belongs to the neurotoxin 19 (CSTX) family. 01 subfamily. In terms of tissue distribution, expressed by the venom gland.

The protein resides in the secreted. The polypeptide is U3-lycotoxin-Ls1a (Lycosa singoriensis (Wolf spider)).